A 147-amino-acid chain; its full sequence is Large ribosomal subunit protein uL16 (147 aa).

It belongs to the universal ribosomal protein uL16 family. As to quaternary structure, part of the 50S ribosomal subunit.

Its function is as follows. Binds 23S rRNA and is also seen to make contacts with the A and possibly P site tRNAs. The chain is Large ribosomal subunit protein uL16 from Caldicellulosiruptor bescii (strain ATCC BAA-1888 / DSM 6725 / KCTC 15123 / Z-1320) (Anaerocellum thermophilum).